A 469-amino-acid polypeptide reads, in one-letter code: Glutamate--tRNA ligase (469 aa).

A 'HIGH' region motif is present at residues 9 to 19 (PSPTGFLHVGG). Zn(2+)-binding residues include C98, C100, C125, and D127. Positions 236–240 (KLSKR) match the 'KMSKS' region motif. K239 provides a ligand contact to ATP.

It belongs to the class-I aminoacyl-tRNA synthetase family. Glutamate--tRNA ligase type 1 subfamily. As to quaternary structure, monomer. It depends on Zn(2+) as a cofactor.

The protein localises to the cytoplasm. The enzyme catalyses tRNA(Glu) + L-glutamate + ATP = L-glutamyl-tRNA(Glu) + AMP + diphosphate. Functionally, catalyzes the attachment of glutamate to tRNA(Glu) in a two-step reaction: glutamate is first activated by ATP to form Glu-AMP and then transferred to the acceptor end of tRNA(Glu). This is Glutamate--tRNA ligase from Shewanella baltica (strain OS185).